The primary structure comprises 131 residues: Insulin-like 3 (131 aa).

The signal sequence occupies residues 1–26; sequence MDPHPLTWALVLLGPALALSRAPAPA. 3 cysteine pairs are disulfide-bonded: C34/C116, C46/C129, and C115/C120. Positions 58–103 are cleaved as a propeptide — c peptide like; the sequence is AVAGGDRELLQWLEGQHLFHGLMASGDPMLVLAPQPPPQASGHHHH.

The protein belongs to the insulin family. As to quaternary structure, heterodimer of a B chain and an A chain linked by two disulfide bonds. As to expression, expressed exclusively in prenatal and postnatal Leydig cells.

The protein localises to the secreted. Seems to play a role in testicular function. May be a trophic hormone with a role in testicular descent in fetal life. Is a ligand for LGR8 receptor. In Sus scrofa (Pig), this protein is Insulin-like 3 (INSL3).